A 141-amino-acid chain; its full sequence is Hemoglobin subunit alpha-D (141 aa).

One can recognise a Globin domain in the interval 1-141 (MLTAEDKKLI…VAAVLAEKYR (141 aa)). His58 and His87 together coordinate heme b.

This sequence belongs to the globin family. Heterotetramer of two alpha-D chains and two beta chains. Red blood cells.

In terms of biological role, involved in oxygen transport from the lung to the various peripheral tissues. This is Hemoglobin subunit alpha-D (HBAD) from Apus apus (Common swift).